A 337-amino-acid chain; its full sequence is Sideroflexin-4 (337 aa).

Ser-2 is subject to N-acetylserine. Transmembrane regions (helical) follow at residues 111 to 131, 133 to 153, and 165 to 185; these read AAFL…LKGI, SVIL…SING, and SLLM…PQFV. Position 197 is an N6-acetyllysine (Lys-197). 2 helical membrane passes run 251 to 271 and 293 to 313; these read ASRI…TYFF and VLAM…IGQI.

The protein belongs to the sideroflexin family.

It localises to the mitochondrion inner membrane. In terms of biological role, mitochondrial amino-acid transporter. Does not act as a serine transporter: not able to mediate transport of serine into mitochondria. This is Sideroflexin-4 from Homo sapiens (Human).